A 109-amino-acid polypeptide reads, in one-letter code: Large ribosomal subunit protein uL24 (109 aa).

This sequence belongs to the universal ribosomal protein uL24 family. Part of the 50S ribosomal subunit.

Functionally, one of two assembly initiator proteins, it binds directly to the 5'-end of the 23S rRNA, where it nucleates assembly of the 50S subunit. In terms of biological role, one of the proteins that surrounds the polypeptide exit tunnel on the outside of the subunit. This Rickettsia bellii (strain RML369-C) protein is Large ribosomal subunit protein uL24.